Here is a 423-residue protein sequence, read N- to C-terminus: UPF0229 protein PLES_05841 (423 aa).

Positions 84-107 (AGEHIARPSGGGGGRGGGKASNSG) are disordered. Positions 92 to 102 (SGGGGGRGGGK) are enriched in gly residues.

It belongs to the UPF0229 family.

This Pseudomonas aeruginosa (strain LESB58) protein is UPF0229 protein PLES_05841.